The following is a 3176-amino-acid chain: Large tegument protein deneddylase (3176 aa).

Over residues 1–12 (MSNGDWGQSQRP) the composition is skewed to polar residues. Positions 1 to 28 (MSNGDWGQSQRPRGTGPMRGIRTMDVNA) are disordered. The deubiquitination activity stretch occupies residues 1–268 (MSNGDWGQSQ…YEANGSGFDL (268 aa)). The Peptidase C76 domain maps to 41-258 (LGTASCNQAH…MLEHYGVYDF (218 aa)). Active-site residues include Cys61, Asp193, and His195. Positions 319-342 (PAARYSPAKTNSPPPSPASAAPAS) are disordered. 5 repeat units span residues 335–339 (PASAA), 340–344 (PASAA), 345–349 (PASAA), 350–354 (PASAA), and 355–359 (PASAA). Residues 335–384 (PASAAPASAAPASAAPASAAPASAAQASVAPASVAPASAAPASAAPDSAA) are 10 X 5 AA approximate repeats of P-A-S-A-A. Residues 360–364 (QASVA) form a 6; approximate repeat. Residues 365-369 (PASVA) form a 7; approximate repeat. 2 repeat units span residues 370-374 (PASAA) and 375-379 (PASAA). Positions 376–386 (ASAAPDSAAPA) are enriched in low complexity. Disordered regions lie at residues 376–683 (ASAA…GSGL), 928–950 (LLSGGDQEGEEGGGEPEDHSIYR), 1170–1193 (APISPASPSATPANHDNPEATPPL), 1435–1461 (LMETGRKEKEKLREQEDKERRERRARE), 2610–3008 (GLVS…PGAR), and 3023–3043 (TYTVQKEAPPSAASQLPKMPK). The 10; approximate repeat unit spans residues 380-384 (PDSAA). Positions 457–488 (PRPPVPPHRPPSAARLPPPVIPIPHQSPPASP) are enriched in pro residues. The segment covering 519-546 (AAPSNPEIPLTTPSPSPTAAAAPTATTL) has biased composition (low complexity). Over residues 579-636 (APSPLLPQQQPPPSAAPAPSPLLPQQQPPPSAARAPSPLPPQQQPLPSATPAPPPAQQ) the composition is skewed to pro residues. The segment at 581–611 (SPLLPQQQPPPSAAPAPSPLLPQQQPPPSAA) is interaction with inner tegument protein. The span at 1170–1182 (APISPASPSATPA) shows a compositional bias: low complexity. Residues 2619 to 2630 (SADNTPASSDRL) show a composition bias toward polar residues. A compositionally biased stretch (low complexity) spans 2643–2654 (EGSTTAESEASG). The span at 2738–2747 (QPAPQQPPSS) shows a compositional bias: pro residues. 2 stretches are compositionally biased toward polar residues: residues 2761 to 2772 (SPHSTPSTASGS) and 2811 to 2831 (SAASLTTFGLQPQDTQASSQD). Over residues 2839–2854 (MQREKKQQGGREEAAE) the composition is skewed to basic and acidic residues. Low complexity-rich tracts occupy residues 2872–2886 (APVVAAGAAASATPA) and 2901–2912 (APALGSGLAAPA).

This sequence belongs to the herpesviridae large tegument protein family. In terms of assembly, interacts with host CUL1 and CUL4A; these interactions inhibit the E3 ligase activity of cullins. Interacts with inner tegument protein. Interacts with capsid vertex specific component CVC2. Interacts with the major capsid protein/MCP. Interacts with host TRIM25 and YWHAZ.

The protein resides in the virion tegument. It localises to the host cytoplasm. Its subcellular location is the host nucleus. The enzyme catalyses Thiol-dependent hydrolysis of ester, thioester, amide, peptide and isopeptide bonds formed by the C-terminal Gly of ubiquitin (a 76-residue protein attached to proteins as an intracellular targeting signal).. Large tegument protein that plays multiple roles in the viral cycle. During viral entry, remains associated with the capsid while most of the tegument is detached and participates in the capsid transport toward the host nucleus. Plays a role in the routing of the capsid at the nuclear pore complex and subsequent uncoating. Within the host nucleus, acts as a deneddylase and promotes the degradation of nuclear CRLs (cullin-RING ubiquitin ligases) and thereby stabilizes nuclear CRL substrates, while cytoplasmic CRLs remain unaffected. These modifications prevent host cell cycle S-phase progression and create a favorable environment allowing efficient viral genome replication. Participates later in the secondary envelopment of capsids. Indeed, plays a linker role for the association of the outer viral tegument to the capsids together with the inner tegument protein. Counteracts host TLR-mediated NF-kappa-B activation through both MYD88 and TICAM1-dependent pathways by interfering with 'Lys-63'- and 'Lys-48'-linked ubiquitination of signaling intermediates such as TRAF6 and IKBKG. Inhibits type I interferon production by forming a tri-molecular complex with host TRIM25 and 14-3-3 thereby promoting TRIM25 autoubiquitination and sequestration of the ligase into inactive protein aggregates. In turn, host RIGI is recruited to the complex but ubiquitination is severely impaired leading to inhibition of the pathway. Also catalyzes the removal of 'Lys-48'- and 'Lys-63'-linked ubiquitin chains on host TBK1 and STING1 suppressing cGAS-STING signaling in addition to the RIGI-MAVS pathway. Inhibits selective autophagy by deubiquitinating host SQSTM1. In turn, decreased SQSTM1 ubiquitination fails to recruit LC3 to SQSTM1-positive aggregates. In the host nucleus, deubiquitinates topoisomerase II subunits TOP2A and TOP2B thereby stabilizing SUMOylated TOP2 which halts the DNA damage response to TOP2-induced double strand DNA breaks and promotes cell survival. This chain is Large tegument protein deneddylase, found in Homo sapiens (Human).